The chain runs to 892 residues: DNA replication licensing factor mcm6 (892 aa).

Residues Ser-96 and Ser-98 each carry the phosphoserine modification. Residues 426-633 form the MCM domain; sequence IYSRLTNSLA…VDRHLAKHIV (208 aa). 476–483 provides a ligand contact to ATP; the sequence is GDPSTSKS. Positions 608–611 match the Arginine finger motif; the sequence is SRFD. Acidic residues predominate over residues 748–758; that stretch reads EDDAEAQELEN. Residues 748–774 form a disordered region; it reads EDDAEAQELENDNTNTTNGNDNVSSEE. Residues 759–769 show a composition bias toward low complexity; it reads DNTNTTNGNDN.

It belongs to the MCM family. Component of the mcm2-7 complex. The complex forms a toroidal hexameric ring with the proposed subunit order mcm2-mcm6-mcm4-mcm7-mcm3-mcm5. The heterodimers of mcm4/mcm6 and mcm3/mcm5 interact with mcm2 and mcm7. Interacts with sld3.

It localises to the nucleus. It carries out the reaction ATP + H2O = ADP + phosphate + H(+). Functionally, acts as a component of the mcm2-7 complex (mcm complex) which is the putative replicative helicase essential for 'once per cell cycle' DNA replication initiation and elongation in eukaryotic cells. The active ATPase sites in the mcm2-7 ring are formed through the interaction surfaces of two neighboring subunits such that a critical structure of a conserved arginine finger motif is provided in trans relative to the ATP-binding site of the Walker A box of the adjacent subunit. The six ATPase active sites, however, are likely to contribute differentially to the complex helicase activity. The polypeptide is DNA replication licensing factor mcm6 (mcm6) (Schizosaccharomyces pombe (strain 972 / ATCC 24843) (Fission yeast)).